The primary structure comprises 466 residues: uncharacterized protein (466 aa).

Residues 4–199 (NHNSKAKRPK…IINVSLQLKL (196 aa)) form the C2 NT-type domain. Disordered stretches follow at residues 262–298 (AKPGTNATGNSTSIKSPTSTNHKSSEMTTKPGLSTTI), 374–393 (LGNKASSWPPNPSDDGYSTM), and 400–452 (EKKQ…LTDR). Residues 266–298 (TNATGNSTSIKSPTSTNHKSSEMTTKPGLSTTI) show a composition bias toward polar residues. Phosphoserine occurs at positions 433 and 439.

To S.pombe SpCC1494.08c.

This is an uncharacterized protein from Saccharomyces cerevisiae (strain ATCC 204508 / S288c) (Baker's yeast).